The following is a 327-amino-acid chain: Auxin-responsive protein IAA18 (327 aa).

Disordered stretches follow at residues 26 to 45, 52 to 98, and 180 to 202; these read VKEADGEGSRNTNLDADEDK, GLPG…IGTT, and NLTNGSSFKQSPERQNDEADDKA. The short motif at 49-53 is the EAR-like (transcriptional repression) element; it reads LKLGL. The span at 58-69 shows a compositional bias: basic and acidic residues; the sequence is QEERAADSREKI. The span at 70 to 82 shows a compositional bias: low complexity; the sequence is QQQQRESSSEPSI. A compositionally biased stretch (polar residues) spans 180–189; the sequence is NLTNGSSFKQ. Residues 190–202 show a composition bias toward basic and acidic residues; it reads SPERQNDEADDKA. The PB1 domain maps to 209–313; it reads RPLVKINMDG…TVKRLRVMRR (105 aa).

The protein belongs to the Aux/IAA family. Homodimers and heterodimers. Highly expressed in flowers. Expressed in roots and etiolated seedlings.

Its subcellular location is the nucleus. Functionally, aux/IAA proteins are short-lived transcriptional factors that function as repressors of early auxin response genes at low auxin concentrations. This chain is Auxin-responsive protein IAA18 (IAA18), found in Oryza sativa subsp. japonica (Rice).